A 348-amino-acid chain; its full sequence is MKGLFKNKSRLPGEIVRQTRDLIALAESEEEETDARNSKRLGICAELCRNIRDLKSILYGNGEAEPVPEACLLLTQEFFRADTLRPLIKSIPKLDLEARKDATQIVANLQKQQVEFRLVASEYLESNLDVIDSLVEGIDHDHELALHYTGMLKECVRHQVVAKYILESKNLEKFFDYVQLPYFDVATDASKIFRELLTRHKSTVAEYLAKNYEWFFAEYNTKLLEKGSYFTKRQASKLLGDVLMDRSNSGVMVKYVSSLDNLRIMMNLLREPTKNIQLEAFHIFKLFVANENKPEDIVAILVANRTKILRLFADLKPEKEDVGFETDKALVMNEIATLSLLDIKTADR.

Belongs to the Mo25 family.

The protein is MO25-like protein At2g03410 of Arabidopsis thaliana (Mouse-ear cress).